A 476-amino-acid polypeptide reads, in one-letter code: METLQMGLLSRSALFKYIIIFLIMINTRGYVLASQEQEAKTSVPEERQVGVTQNKIMTAQYECYQKIMQEPAHGKEGQFCNRTWDGWLCWGDVAAGIISEQRCPDYFQDFDPSEKVTKECGKNGHWFRHPDSNRTWTNYTRCNTFTHEKVKTALNLYYLTIIGHGLSIASLLISLGIFFYFKNLSCQRITLHKNLFFSFVCNSIITIISLSAVANNQALVATNPVICKISQFIHLYLMGCNYFWMLCEGIYLHTLIVVAVFAEKQHLMWYYLLGWGFPLIPACIHAVARSLYYNDNCWISSETHLLYIIHGPICAALLVNLFFLLNIVRVLITKLKVTHQAESNLYMKAVRATLILVPLLGIEFVLFPWKPEGRIAEEIYDYVMHILMHYQGLLVATIFCFFNGEVQAVLKRHWNQYRIQFGSFAHSEGLRSASYTVSSISEIQGTTYTHDYSEHSNGKNCHDMENVFFKTEKQYM.

An N-terminal signal peptide occupies residues 1–33; sequence METLQMGLLSRSALFKYIIIFLIMINTRGYVLA. The Extracellular portion of the chain corresponds to 34–154; that stretch reads SQEQEAKTSV…FTHEKVKTAL (121 aa). 3 disulfide bridges follow: Cys-63–Cys-89, Cys-80–Cys-120, and Cys-103–Cys-142. Asn-81, Asn-133, and Asn-138 each carry an N-linked (GlcNAc...) asparagine glycan. Residues 155–179 traverse the membrane as a helical segment; that stretch reads NLYYLTIIGHGLSIASLLISLGIFF. At 180 to 190 the chain is on the cytoplasmic side; that stretch reads YFKNLSCQRIT. The chain crosses the membrane as a helical span at residues 191–213; that stretch reads LHKNLFFSFVCNSIITIISLSAV. Over 214-224 the chain is Extracellular; sequence ANNQALVATNP. Residues 225 to 253 form a helical membrane-spanning segment; sequence VICKISQFIHLYLMGCNYFWMLCEGIYLH. Topologically, residues 254–267 are cytoplasmic; the sequence is TLIVVAVFAEKQHL. A helical transmembrane segment spans residues 268-288; it reads MWYYLLGWGFPLIPACIHAVA. The Extracellular segment spans residues 289-304; it reads RSLYYNDNCWISSETH. The chain crosses the membrane as a helical span at residues 305–329; it reads LLYIIHGPICAALLVNLFFLLNIVR. At 330-344 the chain is on the cytoplasmic side; the sequence is VLITKLKVTHQAESN. A helical transmembrane segment spans residues 345 to 366; it reads LYMKAVRATLILVPLLGIEFVL. At 367-381 the chain is on the extracellular side; sequence FPWKPEGRIAEEIYD. A helical transmembrane segment spans residues 382-402; it reads YVMHILMHYQGLLVATIFCFF. Residues 403 to 476 lie on the Cytoplasmic side of the membrane; that stretch reads NGEVQAVLKR…VFFKTEKQYM (74 aa).

It belongs to the G-protein coupled receptor 2 family.

The protein resides in the cell membrane. May function as G protein-coupled receptor for calcitonin-gene-related peptides and adrenomedullin. Specificity may be modulated by accessory proteins. May activate cAMP-dependent pathway. The polypeptide is Calcitonin gene-related peptide type 1 receptor (calcrl) (Xenopus laevis (African clawed frog)).